Consider the following 254-residue polypeptide: Claudin-16 (254 aa).

Topologically, residues 1 to 22 (MGPGLAASHVSFPDSLLAKMRD) are cytoplasmic. Residues 23–43 (LLQYVACFFAFFSAGFLVVAT) traverse the membrane as a helical segment. Topologically, residues 44-98 (WTDCWMVNADDSLEVSTKCRGLWWECVTNAFDGIRTCDEYDSILAEHSLKLVVTR) are extracellular. A helical transmembrane segment spans residues 99–119 (ALMITADILAGFGFITLLLGL). Topologically, residues 120-134 (DCVKFLPDEPYIKVR) are cytoplasmic. Residues 135-155 (ISFVAGTTLLIAGAPGIIGSV) form a helical membrane-spanning segment. The Extracellular segment spans residues 156–188 (WYAVDVYVERSSLVLHNIFLGIQYKFGWSCWLG). Residues 189 to 209 (MAGSLGCFLAGAILTCCLYLF) form a helical membrane-spanning segment. Topologically, residues 210–254 (KDVGPERSYPYSTRKAYSTTAVSMPRSHAIPRTQTAKMYAVDTRV) are cytoplasmic. The Interaction with TJP1 signature appears at 252 to 254 (TRV).

Belongs to the claudin family. Can form heteropolymeric tight junction strands with other claudins. Interacts with CLDN19. Interacts (via PDZ-binding motif TRV) with TJP1 (via PDZ domain). Cannot form tight junction strands on its own. In terms of tissue distribution, expressed preferentially in kidney.

The protein resides in the cell junction. Its subcellular location is the tight junction. It is found in the cell membrane. The catalysed reaction is Mg(2+)(in) = Mg(2+)(out). It catalyses the reaction Ca(2+)(in) = Ca(2+)(out). The enzyme catalyses Na(+)(in) = Na(+)(out). It carries out the reaction K(+)(in) = K(+)(out). The catalysed reaction is Rb(+)(in) = Rb(+)(out). It catalyses the reaction Cs(+)(in) = Cs(+)(out). The enzyme catalyses Li(+)(in) = Li(+)(out). In terms of biological role, forms paracellular channels: coassembles with CLDN19 into tight junction strands with cation-selective channels through the strands, conveying epithelial permeability in a process known as paracellular tight junction permeability. Involved in the maintenance of ion gradients along the nephron. In the thick ascending limb (TAL) of Henle's loop, facilitates sodium paracellular permeability from the interstitial compartment to the lumen, contributing to the lumen-positive transepithelial potential that drives paracellular magnesium and calcium reabsorption. The protein is Claudin-16 (CLDN16) of Bos taurus (Bovine).